Reading from the N-terminus, the 590-residue chain is MRTHYSSDINEKLQGQKVTVCGWVHRRRDHGGVIFLDIRDRTGLVQLVFNPDNDNFKVADSLRSEFVIKAEGVVNLRPEGQENKNISSGKVEIIGDSIEVINKSKTIPFQLDDFQSTGEDVKLKYRYIDLRRPEMQHKLITRSKAIRYVRNFLDNNGFLDIETPFLTKATPEGARDYLVPSRNFNGKFYALPQSPQLFKQLLMVSGFDRYYQIVKCFRDEDLRADRQPEFTQIDIEASFIDEAFIMSTMERMIAGLFKETIGVEFATPFQVMTFADAIDKYGSDKPDLRIPLEFVNIKEDMQNEEFKVFSGPANDPQSRVIALRISGGNDKLTRKMIDEYTKFVGIYGAKGLAYIKINSLSQGKEGLQSPIVKNISEETLFKVIEKTSAKEDDLLFFGAGKTKIVNDSMGALRAKIGEDLDLFNKDWAPLWVVDFPMFEKDDNRLYAMHHPFTAPKVSSVEDLVNTNPEELSSRAYDMVINGYEVGGGSIRIHKQDIQAKVFNLLGISDDEAREKFGFMLDALSYGTPIHGGIAFGVDRLIMLLTGTTNIRDVIAFPKTQTASCLMTEAPSTVSLEQLNELGIAVKKEER.

Residue glutamate 172 participates in L-aspartate binding. The tract at residues 196 to 199 (QLFK) is aspartate. Arginine 218 provides a ligand contact to L-aspartate. ATP contacts are provided by residues 218–220 (RDE) and glutamine 227. Histidine 449 contributes to the L-aspartate binding site. Residue glutamate 484 participates in ATP binding. Arginine 491 lines the L-aspartate pocket. 536-539 (GVDR) serves as a coordination point for ATP.

Belongs to the class-II aminoacyl-tRNA synthetase family. Type 1 subfamily. Homodimer.

The protein resides in the cytoplasm. It catalyses the reaction tRNA(Asx) + L-aspartate + ATP = L-aspartyl-tRNA(Asx) + AMP + diphosphate. Aspartyl-tRNA synthetase with relaxed tRNA specificity since it is able to aspartylate not only its cognate tRNA(Asp) but also tRNA(Asn). Reaction proceeds in two steps: L-aspartate is first activated by ATP to form Asp-AMP and then transferred to the acceptor end of tRNA(Asp/Asn). The protein is Aspartate--tRNA(Asp/Asn) ligase of Francisella tularensis subsp. holarctica (strain FTNF002-00 / FTA).